Here is a 261-residue protein sequence, read N- to C-terminus: Thiazole synthase (261 aa).

Lys102 (schiff-base intermediate with DXP) is an active-site residue. 1-deoxy-D-xylulose 5-phosphate-binding positions include Gly163, 189 to 190 (AG), and 211 to 212 (NT).

This sequence belongs to the ThiG family. In terms of assembly, homotetramer. Forms heterodimers with either ThiH or ThiS.

Its subcellular location is the cytoplasm. The catalysed reaction is [ThiS sulfur-carrier protein]-C-terminal-Gly-aminoethanethioate + 2-iminoacetate + 1-deoxy-D-xylulose 5-phosphate = [ThiS sulfur-carrier protein]-C-terminal Gly-Gly + 2-[(2R,5Z)-2-carboxy-4-methylthiazol-5(2H)-ylidene]ethyl phosphate + 2 H2O + H(+). It participates in cofactor biosynthesis; thiamine diphosphate biosynthesis. Catalyzes the rearrangement of 1-deoxy-D-xylulose 5-phosphate (DXP) to produce the thiazole phosphate moiety of thiamine. Sulfur is provided by the thiocarboxylate moiety of the carrier protein ThiS. In vitro, sulfur can be provided by H(2)S. The chain is Thiazole synthase from Myxococcus xanthus (strain DK1622).